The sequence spans 420 residues: Glucose-1-phosphate adenylyltransferase 2 (420 aa).

Residues Tyr109, Gly175, 190-191 (EK), and Ser208 contribute to the alpha-D-glucose 1-phosphate site.

This sequence belongs to the bacterial/plant glucose-1-phosphate adenylyltransferase family. Homotetramer.

It carries out the reaction alpha-D-glucose 1-phosphate + ATP + H(+) = ADP-alpha-D-glucose + diphosphate. It functions in the pathway glycan biosynthesis; glycogen biosynthesis. Its function is as follows. Involved in the biosynthesis of ADP-glucose, a building block required for the elongation reactions to produce glycogen. Catalyzes the reaction between ATP and alpha-D-glucose 1-phosphate (G1P) to produce pyrophosphate and ADP-Glc. This chain is Glucose-1-phosphate adenylyltransferase 2, found in Pseudoalteromonas atlantica (strain T6c / ATCC BAA-1087).